The sequence spans 60 residues: Large ribosomal subunit protein bL32 (60 aa).

It belongs to the bacterial ribosomal protein bL32 family.

This is Large ribosomal subunit protein bL32 from Ehrlichia ruminantium (strain Gardel).